We begin with the raw amino-acid sequence, 1196 residues long: MPTAESEAKVKTKVRFEELLKTHSDLMREKKKLKKKLVRSEENISPDTIRSNLHYMKETTSDDPDTIRSNLPHIKETTSDDVSAANTNNLKKSTRVTKNKLRNTQLATENPNGDASVEEDKQGKPNKKVIKTVPQLTTQDLKPETPENKVDSTHQKTHTKPQPGVDHQKSEKANEGREETDLEEDEELMQAYQCHVTEEMAKEIKRKIRKKLKEQLTYFPSDTLFHDDKLSSEKRKKKKEVPVFSKAETSTLTISGDTVEGEQKKESSVRSVSSDSHQDDEISSMEQSTEDSMQDDTKPKPKKTKKKTKAVADNNEDVDGDGVHEITSRDSPVYPKCLLDDDLVLGVYIHRTDRLKSDFMISHPMVKIHVVDEHTGQYVKKDDSGRPVSSYYEKENVDYILPIMTQPYDFKQLKSRLPEWEEQIVFNENFPYLLRGSDESPKVILFFEILDFLSVDEIKNNSEVQNQECGFRKIAWAFLKLLGANGNANINSKLRLQLYYPPTKPRSPLSVVEAFEWWSKCPRNHYPSTLYVTVRGLKVPDCIKPSYRSMMALQEEKGKPVHCERHHESSSVDTEPGLEESKEVIKWKRLPGQACRIPNKHLFSLNAGERGCFCLDFSHNGRILAAACASRDGYPIILYEIPSGRFMRELCGHLNIIYDLSWSKDDHYILTSSSDGTARIWKNEINNTNTFRVLPHPSFVYTAKFHPAVRELVVTGCYDSMIRIWKVEMREDSAILVRQFDVHKSFINSLCFDTEGHHMYSGDCTGVIVVWNTYVKINDLEHSVHHWTINKEIKETEFKGIPISYLEIHPNGKRLLIHTKDSTLRIMDLRILVARKFVGAANYREKIHSTLTPCGTFLFAGSEDGIVYVWNPETGEQVAMYSDLPFKSPIRDISYHPFENMVAFCAFGQNEPILLYIYDFHVAQQEAEMFKRYNGTFPLPGIHQSQDALCTCPKLPHQGSFQIDEFVHTESSSTKMQLVKQRLETVTEVIRSCAAKVNKNLSFTSPPAVSSQQSKLKQSNMLTAQEILHQFGFTQTGIISIERKPCNHQVDTAPTVVALYDYTANRSDELTIHRGDIIRVFFKDNEDWWYGSIGKGQEGYFPANHVASETLYQELPPEIKERSPPLSPEEKTKIEKSPAPQKQSINKNKSQDFRLGSESMTHSEMRKEQSHEDQGHIMDTRMRKNKQAGRKVTLIE.

Residues 13–45 (KVRFEELLKTHSDLMREKKKLKKKLVRSEENIS) are a coiled coil. Ser-45 carries the post-translational modification Phosphoserine. Disordered regions lie at residues 56-186 (MKET…EEDE), 215-242 (QLTY…KEVP), and 254-327 (ISGD…HEIT). Positions 80–91 (DDVSAANTNNLK) are enriched in polar residues. The span at 92–101 (KSTRVTKNKL) shows a compositional bias: basic residues. Residues 102 to 113 (RNTQLATENPNG) are compositionally biased toward polar residues. 3 stretches are compositionally biased toward basic and acidic residues: residues 141 to 154 (LKPE…DSTH), 166 to 179 (DHQK…GREE), and 224 to 233 (LFHDDKLSSE). The interaction with HAP1 stretch occupies residues 141 to 434 (LKPETPENKV…VFNENFPYLL (294 aa)). Residues 300–309 (KPKKTKKKTK) are compositionally biased toward basic residues. 7 WD repeats span residues 607-649 (AGER…FMRE), 652-691 (GHLN…TNTF), 695-735 (PHPS…DSAI), 742-781 (VHKS…NDLE), 797-837 (EFKG…ARKF), 841-880 (ANYR…QVAM), and 885-926 (PFKS…AQQE). At Ser-1002 the chain carries Phosphoserine. One can recognise an SH3 domain in the interval 1051–1111 (DTAPTVVALY…PANHVASETL (61 aa)). Residues 1115-1196 (LPPEIKERSP…QAGRKVTLIE (82 aa)) form a disordered region. 2 stretches are compositionally biased toward basic and acidic residues: residues 1117 to 1136 (PEIK…KIEK) and 1161 to 1182 (THSE…DTRM). Ser-1123 carries the post-translational modification Phosphoserine.

As to quaternary structure, self-associates. Part of the tectonic-like complex (also named B9 complex). Interacts with MKS1. Interacts with NPHP1; probably as heterodimers and/or AHI1(2):NPHP1(2) heterotetramers. Interacts (via SH3 domain) with the dynamin GTPase DNM2. Interacts with HAP1; probably as AHI1(2):HAP1(2) heterotetramers. Interacts with RAB8A. Interacts with CEND1. Interacts with CTNNB1/beta-catenin. Interacts with SPATA7. Highly expressed in the most primitive normal hematopoietic cells. Expressed in brain, particularly in neurons that give rise to the crossing axons of the corticospinal tract and superior cerebellar peduncles. Expressed in kidney (renal collecting duct cells) (at protein level).

It localises to the cytoplasm. Its subcellular location is the cytoskeleton. The protein resides in the cilium basal body. The protein localises to the cell junction. It is found in the adherens junction. It localises to the microtubule organizing center. Its subcellular location is the centrosome. The protein resides in the centriole. Involved in vesicle trafficking and required for ciliogenesis, formation of primary non-motile cilium, and recruitment of RAB8A to the basal body of primary cilium. Component of the tectonic-like complex, a complex localized at the transition zone of primary cilia and acting as a barrier that prevents diffusion of transmembrane proteins between the cilia and plasma membranes. Involved in neuronal differentiation. As a positive modulator of classical Wnt signaling, may play a crucial role in ciliary signaling during cerebellum embryonic development. This is Jouberin (AHI1) from Homo sapiens (Human).